Consider the following 132-residue polypeptide: Myelin P2 protein (132 aa).

Serine 2 carries the N-acetylserine modification. Arginine 107 contacts (9Z)-octadecenoate. Arginine 107 is a hexadecanoate binding site. A disulfide bridge connects residues cysteine 118 and cysteine 125. 127–129 is a binding site for (9Z)-octadecenoate; sequence RIY. 127–129 serves as a coordination point for hexadecanoate; the sequence is RIY.

It belongs to the calycin superfamily. Fatty-acid binding protein (FABP) family. As to quaternary structure, monomer.

The protein resides in the cytoplasm. In terms of biological role, may play a role in lipid transport protein in Schwann cells. May bind cholesterol. The chain is Myelin P2 protein from Sus scrofa (Pig).